A 408-amino-acid polypeptide reads, in one-letter code: Probable pectate lyase 5 (408 aa).

The N-terminal stretch at 1-27 (MRMTLVHLSLSLFSCLLLVLSPTFIAS) is a signal peptide. Residue asparagine 45 is glycosylated (N-linked (GlcNAc...) asparagine). Residues aspartate 206, aspartate 230, and aspartate 234 each coordinate Ca(2+). Residue arginine 286 is part of the active site.

It belongs to the polysaccharide lyase 1 family. Ca(2+) is required as a cofactor.

It catalyses the reaction Eliminative cleavage of (1-&gt;4)-alpha-D-galacturonan to give oligosaccharides with 4-deoxy-alpha-D-galact-4-enuronosyl groups at their non-reducing ends.. It participates in glycan metabolism; pectin degradation; 2-dehydro-3-deoxy-D-gluconate from pectin: step 2/5. This Arabidopsis thaliana (Mouse-ear cress) protein is Probable pectate lyase 5.